Reading from the N-terminus, the 59-residue chain is Large ribosomal subunit protein bL32 (59 aa).

Residues methionine 1–aspartate 59 are disordered. Composition is skewed to basic residues over residues serine 9–histidine 19 and arginine 49–aspartate 59.

Belongs to the bacterial ribosomal protein bL32 family.

This chain is Large ribosomal subunit protein bL32, found in Cupriavidus necator (strain ATCC 17699 / DSM 428 / KCTC 22496 / NCIMB 10442 / H16 / Stanier 337) (Ralstonia eutropha).